The primary structure comprises 241 residues: Type III pantothenate kinase (241 aa).

6–13 (DVGNTRIK) contributes to the ATP binding site. 94-97 (GIDR) contacts substrate. The Proton acceptor role is filled by aspartate 96. Aspartate 117 contributes to the K(+) binding site. An ATP-binding site is contributed by threonine 120. A substrate-binding site is contributed by threonine 172.

This sequence belongs to the type III pantothenate kinase family. In terms of assembly, homodimer. Requires NH4(+) as cofactor. It depends on K(+) as a cofactor.

The protein resides in the cytoplasm. It catalyses the reaction (R)-pantothenate + ATP = (R)-4'-phosphopantothenate + ADP + H(+). It functions in the pathway cofactor biosynthesis; coenzyme A biosynthesis; CoA from (R)-pantothenate: step 1/5. Its function is as follows. Catalyzes the phosphorylation of pantothenate (Pan), the first step in CoA biosynthesis. The sequence is that of Type III pantothenate kinase from Flavobacterium psychrophilum (strain ATCC 49511 / DSM 21280 / CIP 103535 / JIP02/86).